The primary structure comprises 232 residues: MSGFTFKQFHINQNSCAMKVSTDGILLGAWADVKHCKNILDMGSGTGLLALMLAQRTEENCQIQAVELDPIAAKQAQENINNSVWKNRIQLIQTDIQHFLQTTAQTFDLIVANPPYFEQGIACKNEERELARYTKQSHLNWLEWAATRLSENGRISFVLPYDAGKTLIKSTALFCIKQTNVITKIGKTPQRMLLTFAKQPQVLMQDQLVIYDADNQYTEAFIELTKDFYLKF.

This sequence belongs to the methyltransferase superfamily. tRNA (adenine-N(6)-)-methyltransferase family.

Its subcellular location is the cytoplasm. It carries out the reaction adenosine(37) in tRNA1(Val) + S-adenosyl-L-methionine = N(6)-methyladenosine(37) in tRNA1(Val) + S-adenosyl-L-homocysteine + H(+). In terms of biological role, specifically methylates the adenine in position 37 of tRNA(1)(Val) (anticodon cmo5UAC). The chain is tRNA1(Val) (adenine(37)-N6)-methyltransferase from Haemophilus influenzae (strain PittEE).